The primary structure comprises 37 residues: Large ribosomal subunit protein bL36 (37 aa).

This sequence belongs to the bacterial ribosomal protein bL36 family.

This is Large ribosomal subunit protein bL36 from Deinococcus geothermalis (strain DSM 11300 / CIP 105573 / AG-3a).